The primary structure comprises 275 residues: MSFVIATFYHFVELSNYYDMKDEIKAACNNVELKGTILLAEEGVNATISGERNAIDKIFDFLRSDYRLRDLTWKESAAEYQPFSKMKVKLKREIVNLGVSNLDISLRGKYVDPEHWDDFTSQPDVLVIDTRNEYEVKLGKFKNAINPHTQCFREFPQWTESFSESKDLKVAMYCTGGIRCEKSTAYMKSLGFSDVYHLKGGILSYLEKTYNKNGNWKGECFVFDDRIAVDNSLTPSNTIKCIFCSNQVSTDKLKSVPRGQVVCSDCKLQCYSYNK.

The Rhodanese domain occupies 121–214; the sequence is SQPDVLVIDT…YLEKTYNKNG (94 aa). The active-site Cysteine persulfide intermediate is the Cys-174.

Belongs to the TrhO family.

It catalyses the reaction uridine(34) in tRNA + AH2 + O2 = 5-hydroxyuridine(34) in tRNA + A + H2O. In terms of biological role, catalyzes oxygen-dependent 5-hydroxyuridine (ho5U) modification at position 34 in tRNAs. This Wolbachia pipientis wMel protein is tRNA uridine(34) hydroxylase.